A 237-amino-acid polypeptide reads, in one-letter code: Ribosomal RNA small subunit methyltransferase G (237 aa).

S-adenosyl-L-methionine-binding positions include Gly-78, Phe-83, 129-130, and Arg-148; that span reads AE. The tract at residues 216–237 is disordered; sequence SKKKETPNKYPRKAGTPNKKPL.

This sequence belongs to the methyltransferase superfamily. RNA methyltransferase RsmG family.

The protein resides in the cytoplasm. Its function is as follows. Specifically methylates the N7 position of a guanine in 16S rRNA. The chain is Ribosomal RNA small subunit methyltransferase G from Streptococcus agalactiae serotype Ia (strain ATCC 27591 / A909 / CDC SS700).